The chain runs to 486 residues: MATFKDTCYYYKRINKLNHAVLKLGVNDTWRPSPPTRYKGWCLDCCQHTDLTYCRGCTMYHVCQWCSQYGRCFLDSEPHLLRMRTFKNEVTKNDLMNLIDMYDTLFPINQRIVDKFMNSTRQHKCRNECITQWYNHLLMPITLQSLSIELDGDVYYVFGYYDSMSDINQTPFSFTNLIDMYDKLLLDNINFNRMSFLPVTLQQEYALRYFSKSRFISEKRKCVSDLHFSVNVIENLHNPSFKIQITRNCSDFSSDWNGVCKLVKDVSAYFNVLKTSHIEFYSISTRCRVFTQHKLKIASKHIKPNYVTSNHKTSATEVHNCKWCSINNSYTVWNDFRVKKIYDNIFNFLRALVKSNANVGHCSSQEKIYEYIKDVLDVCDDEKWKIAVTEIFNCLEPVELNNVKYALFNHEVNWDVINLLVQSVDKVPQILTLNDIVIIMKSIIYEWFDIRYMRNTPMTTFTVDKLRRLCTGVKTVDYDSGISDVE.

The tract at residues 1-81 is RNA-binding; that stretch reads MATFKDTCYY…CFLDSEPHLL (81 aa). Residues 42-79 form a zinc-binding domain region; sequence CLDCCQHTDLTYCRGCTMYHVCQWCSQYGRCFLDSEPH. An important for cytoskeleton localization region spans residues 82–176; that stretch reads RMRTFKNEVT…INQTPFSFTN (95 aa). The tract at residues 317–486 is interaction with host IRF3; it reads EVHNCKWCSI…DYDSGISDVE (170 aa). Residues 479 to 483 carry the IKBKB-like degron (ILD) motif motif; sequence DSGIS. Positions 480-483 match the pLxIS motif motif; sequence SGIS.

This sequence belongs to the rotavirus NSP1 family. In terms of assembly, interacts (via C-terminus) with host IRF3; this interaction leads to IRF3 degradation. Interacts with host IRF7; this interaction leads to IRF7 degradation. Interacts with host CUL1 and CUL3. Interacts with host BTRC. In terms of processing, the C-terminal region is phosphorylated by host CKII/CSNK2A1. Phosphorylation of the DSGXS motif is essential for host NF-kappa-B inhibition.

It localises to the host cytoplasm. It is found in the host cytoskeleton. Plays a role in the inhibition of host innate immunity by inducing the degradation of key host factors required to activate interferon production such as IRF3, IRF5 or IRF7. Associates with components of cullin RING ligases (CRLs) including CUL1 or CUL3, which are essential multisubunit ubiquitination complexes, to modulate their activities. Recognizes the host NF-kappa-B regulator BTRC through the presence of a DSGXS motif in the C-terminal substrate recognition domain. The chain is Non-structural protein 1 from Rotavirus A (strain RVA/Human/United States/D/1974/G1P1A[8]) (RV-A).